The primary structure comprises 376 residues: Growth/differentiation factor 8 (376 aa).

The first 24 residues, 1–24, serve as a signal peptide directing secretion; it reads MMQKLQMYVYIYLFMLIAAGPVDL. Positions 25-267 are excised as a propeptide; it reads NEGSEREENV…VTDTPKRSRR (243 aa). Asparagine 72 carries an N-linked (GlcNAc...) asparagine glycan. 4 disulfides stabilise this stretch: cysteine 273-cysteine 283, cysteine 282-cysteine 341, cysteine 310-cysteine 373, and cysteine 314-cysteine 375.

The protein belongs to the TGF-beta family. Homodimer; disulfide-linked. Interacts with WFIKKN2, leading to inhibit its activity. Interacts with FSTL3. Synthesized as large precursor molecule that undergoes proteolytic cleavage to generate an N-terminal propeptide and a disulfide linked C-terminal dimer, which is the biologically active molecule. The circulating form consists of a latent complex of the C-terminal dimer and other proteins, including its propeptide, which maintain the C-terminal dimer in a latent, inactive state. Ligand activation requires additional cleavage of the prodomain by a tolloid-like metalloproteinase. In terms of tissue distribution, expressed specifically in developing and adult skeletal muscle. Weak expression in adipose tissue.

The protein localises to the secreted. Functionally, acts specifically as a negative regulator of skeletal muscle growth. The sequence is that of Growth/differentiation factor 8 (Mstn) from Mus musculus (Mouse).